Consider the following 255-residue polypeptide: MSSPGRPKGEYRSAQHAGAVAGPPGRPDGEHRGSSGADPNGRLRQACDSLGLRVEAAQADKLLAYLAQMQRWNRTYNLTAIRDPEQMLVQHLFDSLSVVDPLSRVVGADTAATVYDIGSGGGLPGVVLAIMRPTWQIGCVDAVEKKMAFVRQMSGVLALPNLRALHARVEELPPAGCDVVISRAFASLNDFASLAGRHVRNDGTLVAMKGKVPEDEIQTLHQQGEWQVQEIQALQVPALDAQRCLIWMRRSQGTL.

The interval 1–44 (MSSPGRPKGEYRSAQHAGAVAGPPGRPDGEHRGSSGADPNGRLR) is disordered. S-adenosyl-L-methionine contacts are provided by residues glycine 118, leucine 123, 169 to 170 (VE), and arginine 183.

It belongs to the methyltransferase superfamily. RNA methyltransferase RsmG family.

The protein localises to the cytoplasm. It catalyses the reaction guanosine(527) in 16S rRNA + S-adenosyl-L-methionine = N(7)-methylguanosine(527) in 16S rRNA + S-adenosyl-L-homocysteine. Functionally, specifically methylates the N7 position of guanine in position 527 of 16S rRNA. The polypeptide is Ribosomal RNA small subunit methyltransferase G (Bordetella petrii (strain ATCC BAA-461 / DSM 12804 / CCUG 43448)).